Reading from the N-terminus, the 199-residue chain is Twist-related protein 1 (199 aa).

Over residues 1 to 18 the composition is skewed to low complexity; that stretch reads MMQDVSSSPVSPADDSLS. Positions 1 to 102 are disordered; sequence MMQDVSSSPV…GGGSPQSYEE (102 aa). The span at 34-43 shows a compositional bias: basic residues; it reads RGGRKRRSSR. Gly residues-rich tracts occupy residues 46 to 65 and 80 to 96; these read AGGG…GGDE and GCGG…GGGS. The 52-residue stretch at 105 to 156 folds into the bHLH domain; that stretch reads TQRVMANVRERQRTQSLNEAFAALRKIIPTLPSDKLSKIQTLKLAARYIDFL. Positions 158 to 188 are sufficient for transactivation activity; that stretch reads QVLQSDELDSKMASCSYVAHERLSYAFSVWR.

As to quaternary structure, efficient DNA binding requires dimerization with another bHLH protein. Homodimer or heterodimer with E proteins such as TCF3. ID1 binds preferentially to TCF3 but does not interact efficiently with TWIST1 so ID1 levels control the amount of TCF3 available to dimerize with TWIST and thus determine the type of dimer formed.

Its subcellular location is the nucleus. Acts as a transcriptional regulator. Inhibits myogenesis by sequestrating E proteins, inhibiting trans-activation by MEF2, and inhibiting DNA-binding by MYOD1 through physical interaction. This interaction probably involves the basic domains of both proteins. Also represses expression of pro-inflammatory cytokines such as TNFA and IL1B. Regulates cranial suture patterning and fusion. Activates transcription as a heterodimer with E proteins. Regulates gene expression differentially, depending on dimer composition. Homodimers induce expression of FGFR2 and POSTN while heterodimers repress FGFR2 and POSTN expression and induce THBS1 expression. Heterodimerization is also required for osteoblast differentiation. Represses the activity of the circadian transcriptional activator: NPAS2-BMAL1 heterodimer. In Microcebus murinus (Gray mouse lemur), this protein is Twist-related protein 1 (TWIST1).